Reading from the N-terminus, the 454-residue chain is Probable tRNA methyltransferase 9B (454 aa).

S214 carries the phosphoserine modification.

It belongs to the methyltransferase superfamily. In terms of tissue distribution, down-regulated in breast, bladder, colorectal, cervix and testicular carcinomas.

Functionally, may modify wobble uridines in specific arginine and glutamic acid tRNAs. Acts as a tumor suppressor by promoting the expression of LIN9. This is Probable tRNA methyltransferase 9B from Homo sapiens (Human).